The following is a 301-amino-acid chain: Transcription elongation factor A protein 1 (301 aa).

Met-1 bears the N-acetylmethionine mark. In terms of domain architecture, TFIIS N-terminal spans 3–80; that stretch reads DEVVRIAKKM…KSWKKLLDGP (78 aa). Lys-55 participates in a covalent cross-link: Glycyl lysine isopeptide (Lys-Gly) (interchain with G-Cter in ubiquitin). Ser-57, Ser-81, Ser-97, and Ser-100 each carry phosphoserine. Residues 76-93 are compositionally biased toward basic and acidic residues; it reads LLDGPSTDKDPEEKKKEP. Residues 76–139 form a disordered region; the sequence is LLDGPSTDKD…FPRAPSTSDS (64 aa). One can recognise a TFIIS central domain in the interval 140-256; the sequence is VRLKCREMLA…EHQMAKTGGT (117 aa). The TFIIS-type zinc-finger motif lies at 259 to 299; sequence DLFTCGKCKKKNCTYTQVQTRSADEPMTTFVVCNECGNRWK. Zn(2+) contacts are provided by Cys-263, Cys-266, Cys-291, and Cys-294.

The protein belongs to the TFS-II family. Interacts with EAF2. Associates with UBR5 and forms a transcription regulatory complex made of CDK9, Pol II, UBR5 and TCEA1/TFIIS. Part of TBP-based Pol II pre-initiation complex (PIC), in which Pol II core assembles with general transcription factors and other specific initiation factors including GTF2E1, GTF2E2, GTF2F1, GTF2F2, TCEA1, ERCC2, ERCC3, GTF2H2, GTF2H3, GTF2H4, GTF2H5, GTF2A1, GTF2A2, GTF2B and TBP; this large multi-subunit PIC complex mediates DNA unwinding and targets Pol II core to the transcription start site where the first phosphodiester bond forms.

The protein localises to the nucleus. In terms of biological role, necessary for efficient RNA polymerase II transcription elongation past template-encoded arresting sites. The arresting sites in DNA have the property of trapping a certain fraction of elongating RNA polymerases that pass through, resulting in locked ternary complexes. Cleavage of the nascent transcript by S-II allows the resumption of elongation from the new 3'-terminus. The sequence is that of Transcription elongation factor A protein 1 (Tcea1) from Mus musculus (Mouse).